A 930-amino-acid polypeptide reads, in one-letter code: APC membrane recruitment protein 1 (930 aa).

6 disordered regions span residues 1-33, 55-76, 104-133, 161-193, 222-245, and 366-454; these read MEIA…PPSV, FFGG…TKSQ, CSEP…LFSS, TVPG…NQTT, EMDK…RQEG, and EVCY…PRDS. Residues 222–242 are compositionally biased toward basic and acidic residues; that stretch reads EMDKRRRAEEEGIGEDEKTGR. 2 stretches are compositionally biased toward polar residues: residues 377–399 and 413–424; these read DSPS…SSPM and SPQSDRQESVPN. Basic and acidic residues predominate over residues 439–452; the sequence is EESRERPHQERLPR.

It belongs to the Amer family.

Its subcellular location is the cytoplasm. It localises to the cell membrane. It is found in the nucleus. Regulator of the canonical Wnt signaling pathway. Acts by specifically binding phosphatidylinositol 4,5-bisphosphate (PtdIns(4,5)P2), translocating to the cell membrane and interacting with key regulators of the canonical Wnt signaling pathway, such as components of the beta-catenin destruction complex. Acts both as a positive and negative regulator of the Wnt signaling pathway, depending on the context. The protein is APC membrane recruitment protein 1 (amer1) of Danio rerio (Zebrafish).